The following is an 87-amino-acid chain: Long neurotoxin homolog (87 aa).

The N-terminal stretch at M1 to T21 is a signal peptide. 5 disulfides stabilise this stretch: C24–C47, C27–C32, C40–C64, C68–C80, and C81–C86.

As to expression, expressed by the venom gland.

It is found in the secreted. Functionally, inhibits carbachol-induced muscle contraction in a reversible manner. The polypeptide is Long neurotoxin homolog (Bungarus multicinctus (Many-banded krait)).